We begin with the raw amino-acid sequence, 375 residues long: Aminomethyltransferase (375 aa).

It belongs to the GcvT family. The glycine cleavage system is composed of four proteins: P, T, L and H.

The enzyme catalyses N(6)-[(R)-S(8)-aminomethyldihydrolipoyl]-L-lysyl-[protein] + (6S)-5,6,7,8-tetrahydrofolate = N(6)-[(R)-dihydrolipoyl]-L-lysyl-[protein] + (6R)-5,10-methylene-5,6,7,8-tetrahydrofolate + NH4(+). Functionally, the glycine cleavage system catalyzes the degradation of glycine. In Cupriavidus necator (strain ATCC 17699 / DSM 428 / KCTC 22496 / NCIMB 10442 / H16 / Stanier 337) (Ralstonia eutropha), this protein is Aminomethyltransferase.